We begin with the raw amino-acid sequence, 669 residues long: Collagen alpha-1(II) chain (669 aa).

Pro-3 and Pro-12 each carry 4-hydroxyproline. The span at Xaa-318–Pro-327 shows a compositional bias: low complexity. 3 disordered regions span residues Xaa-318–Xaa-360, Xaa-405–Xaa-438, and Xaa-638–Arg-669. Residues Pro-336 and Pro-345 each carry the 4-hydroxyproline modification. Low complexity-rich tracts occupy residues Ala-339 to Xaa-360 and Xaa-405 to Pro-420. Position 413 is a 3-hydroxyproline (Pro-413). Pro-414, Pro-420, and Pro-426 each carry 4-hydroxyproline. Low complexity-rich tracts occupy residues Ala-429–Xaa-438 and Xaa-638–Leu-647. The residue at position 648 (Pro-648) is a 4-hydroxyproline. Position 650 is a 3-hydroxyproline (Pro-650).

It belongs to the fibrillar collagen family. Homotrimers of alpha 1(II) chains. Post-translationally, contains mostly 4-hydroxyproline. Prolines at the third position of the tripeptide repeating unit (G-X-P) are 4-hydroxylated in some or all of the chains. Contains 3-hydroxyproline at a few sites. This modification occurs on the first proline residue in the sequence motif Gly-Pro-Hyp, where Hyp is 4-hydroxyproline.

It is found in the secreted. The protein localises to the extracellular space. It localises to the extracellular matrix. In terms of biological role, type II collagen is specific for cartilaginous tissues. It is essential for the normal embryonic development of the skeleton, for linear growth and for the ability of cartilage to resist compressive forces. This is Collagen alpha-1(II) chain from Mammut americanum (American mastodon).